The primary structure comprises 1529 residues: DNA-directed RNA polymerase subunit beta' (1529 aa).

Zn(2+) is bound by residues Cys-156, Cys-158, Cys-183, and Cys-186. 3 residues coordinate Mg(2+): Asp-1328, Asp-1330, and Asp-1332.

It belongs to the RNA polymerase beta' chain family. RpoC1 subfamily. In terms of assembly, in plastids the minimal PEP RNA polymerase catalytic core is composed of four subunits: alpha, beta, beta', and beta''. When a (nuclear-encoded) sigma factor is associated with the core the holoenzyme is formed, which can initiate transcription. Mg(2+) is required as a cofactor. Zn(2+) serves as cofactor.

The protein resides in the plastid. Its subcellular location is the chloroplast. The enzyme catalyses RNA(n) + a ribonucleoside 5'-triphosphate = RNA(n+1) + diphosphate. In terms of biological role, DNA-dependent RNA polymerase catalyzes the transcription of DNA into RNA using the four ribonucleoside triphosphates as substrates. In Tetradesmus obliquus (Green alga), this protein is DNA-directed RNA polymerase subunit beta'.